A 108-amino-acid polypeptide reads, in one-letter code: U-scoloptoxin(10)-Sm1a (108 aa).

The N-terminal stretch at 1 to 24 is a signal peptide; it reads MNKQWLHFFSVLLLCYVIEETCSL.

It belongs to the scoloptoxin-10 family. Post-translationally, contains 3 disulfide bonds. In terms of tissue distribution, expressed by the venom gland.

The protein resides in the secreted. This Scolopendra morsitans (Tanzanian blue ringleg centipede) protein is U-scoloptoxin(10)-Sm1a.